Here is a 364-residue protein sequence, read N- to C-terminus: Dual-specificity RNA methyltransferase RlmN (364 aa).

E91 (proton acceptor) is an active-site residue. In terms of domain architecture, Radical SAM core spans 97–333 (ESDRGTLCIS…VTVRKTRGDD (237 aa)). C104 and C338 are oxidised to a cystine. 3 residues coordinate [4Fe-4S] cluster: C111, C115, and C118. Residues 164 to 165 (GE), S196, 218 to 220 (SLH), and N295 contribute to the S-adenosyl-L-methionine site. Residue C338 is the S-methylcysteine intermediate of the active site.

It belongs to the radical SAM superfamily. RlmN family. Requires [4Fe-4S] cluster as cofactor.

It is found in the cytoplasm. It catalyses the reaction adenosine(2503) in 23S rRNA + 2 reduced [2Fe-2S]-[ferredoxin] + 2 S-adenosyl-L-methionine = 2-methyladenosine(2503) in 23S rRNA + 5'-deoxyadenosine + L-methionine + 2 oxidized [2Fe-2S]-[ferredoxin] + S-adenosyl-L-homocysteine. The enzyme catalyses adenosine(37) in tRNA + 2 reduced [2Fe-2S]-[ferredoxin] + 2 S-adenosyl-L-methionine = 2-methyladenosine(37) in tRNA + 5'-deoxyadenosine + L-methionine + 2 oxidized [2Fe-2S]-[ferredoxin] + S-adenosyl-L-homocysteine. Its function is as follows. Specifically methylates position 2 of adenine 2503 in 23S rRNA and position 2 of adenine 37 in tRNAs. m2A2503 modification seems to play a crucial role in the proofreading step occurring at the peptidyl transferase center and thus would serve to optimize ribosomal fidelity. The sequence is that of Dual-specificity RNA methyltransferase RlmN from Neisseria meningitidis serogroup C (strain 053442).